A 125-amino-acid polypeptide reads, in one-letter code: Small ribosomal subunit protein bS6 (125 aa).

The protein belongs to the bacterial ribosomal protein bS6 family.

In terms of biological role, binds together with bS18 to 16S ribosomal RNA. The polypeptide is Small ribosomal subunit protein bS6 (rpsF) (Pasteurella multocida (strain Pm70)).